The primary structure comprises 273 residues: Undecaprenyl-diphosphatase (273 aa).

8 helical membrane-spanning segments follow: residues 13–35 (GLVE…VFGN), 45–62 (VFEI…VFEY), 82–102 (FVLN…LFGK), 108–128 (LFNP…ILWV), 144–164 (ALRP…LIPG), 186–206 (TEFS…YDVL), 219–239 (LILI…KALL), and 250–270 (FAYY…SGWI).

The protein belongs to the UppP family.

Its subcellular location is the cell inner membrane. The enzyme catalyses di-trans,octa-cis-undecaprenyl diphosphate + H2O = di-trans,octa-cis-undecaprenyl phosphate + phosphate + H(+). Functionally, catalyzes the dephosphorylation of undecaprenyl diphosphate (UPP). Confers resistance to bacitracin. This is Undecaprenyl-diphosphatase from Neisseria meningitidis serogroup C (strain 053442).